Consider the following 152-residue polypeptide: CMT1A duplicated region transcript 4 protein (152 aa).

Over residues 1-11 the composition is skewed to basic and acidic residues; the sequence is MDARRMKKEEG. 2 disordered regions span residues 1-23 and 60-89; these read MDAR…RKLL and ERPW…GKAV. Polar residues predominate over residues 65-74; sequence SRQNKPSSVI.

In terms of tissue distribution, expressed in fetal skeletal muscle and kidney.

The polypeptide is CMT1A duplicated region transcript 4 protein (CDRT4) (Homo sapiens (Human)).